Reading from the N-terminus, the 123-residue chain is Large ribosomal subunit protein bL12 (123 aa).

The protein belongs to the bacterial ribosomal protein bL12 family. Homodimer. Part of the ribosomal stalk of the 50S ribosomal subunit. Forms a multimeric L10(L12)X complex, where L10 forms an elongated spine to which 2 to 4 L12 dimers bind in a sequential fashion. Binds GTP-bound translation factors.

Forms part of the ribosomal stalk which helps the ribosome interact with GTP-bound translation factors. Is thus essential for accurate translation. The protein is Large ribosomal subunit protein bL12 of Rhodospirillum rubrum (strain ATCC 11170 / ATH 1.1.1 / DSM 467 / LMG 4362 / NCIMB 8255 / S1).